The chain runs to 237 residues: Lectin ConGF (237 aa).

The Mn(2+) site is built by E8 and D10. Ca(2+)-binding residues include D10, Y12, N14, and D19. N14 contributes to the a carbohydrate binding site. Residues D19 and H24 each contribute to the Mn(2+) site. A carbohydrate-binding residues include L99, Y100, D208, and R228.

It belongs to the leguminous lectin family. In terms of assembly, homotetramer; dimer of dimers. In terms of processing, concanavalin A-like lectins of the Diocleinae subtribe undergo proteolytic processing referred to as circular permutation. The propeptide is split into an N-terminal and a C-terminal part, the gamma and beta chain, respectively. These are then religated in beta-gamma order to form the mature alpha chain. The beta and gamma chains can often be detected in cell extracts. Residues 1-118 of the mature chain, as displayed here, probably constitute the beta chain in the propeptide, residues 119-237 the gamma chain.

Functionally, lectin. Induces paw edema in mice. Has a weak vasorelaxant effect on rat aorta. Has anti-inflammatory and anti-nociceptive effects. The sequence is that of Lectin ConGF from Canavalia grandiflora (Jackbean).